Here is a 200-residue protein sequence, read N- to C-terminus: GTP cyclohydrolase-2 (200 aa).

49-53 contributes to the GTP binding site; it reads RVHSE. Zn(2+) is bound by residues cysteine 54, cysteine 65, and cysteine 67. Residues glutamine 70, 92–94, and threonine 114 contribute to the GTP site; that span reads EGR. Aspartate 126 (proton acceptor) is an active-site residue. Arginine 128 serves as the catalytic Nucleophile. The GTP site is built by threonine 149 and lysine 154.

This sequence belongs to the GTP cyclohydrolase II family. In terms of assembly, homodimer. The cofactor is Zn(2+).

It catalyses the reaction GTP + 4 H2O = 2,5-diamino-6-hydroxy-4-(5-phosphoribosylamino)-pyrimidine + formate + 2 phosphate + 3 H(+). It participates in cofactor biosynthesis; riboflavin biosynthesis; 5-amino-6-(D-ribitylamino)uracil from GTP: step 1/4. Catalyzes the conversion of GTP to 2,5-diamino-6-ribosylamino-4(3H)-pyrimidinone 5'-phosphate (DARP), formate and pyrophosphate. This chain is GTP cyclohydrolase-2, found in Klebsiella pneumoniae subsp. pneumoniae (strain ATCC 700721 / MGH 78578).